A 586-amino-acid chain; its full sequence is MTLFILTETSAGYALLKAKDKKLLKRDDLATEASTAEGVSNLLKLKSFQKFDSATAALEEVASVVEGKVTPRLASLLDEIKDEKKVSLAVADPKLGNAIGKLPGLDISLIADSTTADIYRAIREHLPTLIPGLLPQDMSTMSLGLSHSLARHKLKFSPDKIDTMIVQAIGLLDDLDKELNNYAMRVKEWYGWHFPELAKILNDNIAYSRLVLKMGMRSNFENADLAEILPEEIEAAVKAAADRSMGTEISEDDLENIQALAEQVVGFSEYRSQLAGYITARMNAIAPNLTALVGDLVGARLIAHAGSLTNLSKSPASTLQILGAEKALFRALKTKHDTPKYGLIYHASLIGQATGKNKGKMARVLAAKASLGLRVDALAEWDDDVTEEDKAALGTEARFNLERKLAALEGKPLKPRGVAIGPDGASAQPGKFNINEARKYNPDADAVDQDKATPSKKMLVQEVQDEEMADADSDEEPAANGVDSDSSDEETSKKSKKSKGSEIEKLAEKAGLSVKRYKRKLERGEIQFDAAGNPSAISKKDIKKAKKEAKKEAKKASKGDDKEKKRKRSDETEDTDGKKKKKKRDD.

The Nop domain occupies 285–410 (IAPNLTALVG…LERKLAALEG (126 aa)). The span at 464-477 (QDEEMADADSDEEP) shows a compositional bias: acidic residues. The interval 464–586 (QDEEMADADS…GKKKKKKRDD (123 aa)) is disordered. Composition is skewed to basic and acidic residues over residues 499 to 508 (KGSEIEKLAE) and 549 to 563 (AKKEAKKASKGDDKE).

It belongs to the NOP5/NOP56 family.

Its subcellular location is the nucleus. The protein resides in the nucleolus. In terms of biological role, required for pre-18S rRNA processing. May bind microtubules. The sequence is that of Nucleolar protein 58 (nop58) from Emericella nidulans (strain FGSC A4 / ATCC 38163 / CBS 112.46 / NRRL 194 / M139) (Aspergillus nidulans).